Reading from the N-terminus, the 587-residue chain is Prolycopene isomerase 2, chloroplastic (587 aa).

A chloroplast-targeting transit peptide spans 1–50 (MLCLSLNSSSTSPPKLPLHHSFSRRGIRSWVRSPCVQRKKLGFWSSPKAV).

This sequence belongs to the carotenoid/retinoid oxidoreductase family. CrtISO subfamily. It depends on NAD(+) as a cofactor. NADP(+) is required as a cofactor. The cofactor is FAD. As to expression, up-regulated in the flower buds and flower lip tissue, while it is weakly expressed in leaves.

Its subcellular location is the plastid. It is found in the chloroplast membrane. The catalysed reaction is 7,7',9,9'-tetra-cis-lycopene = all-trans-lycopene. Its pathway is carotenoid biosynthesis; lycopene biosynthesis. Its function is as follows. Carotene cis-trans-isomerase that converts 7,9,9'-tri-cis-neurosporene to 9'-cis-neurosporene and 7,9,9',7'-tetra-cis-lycopene (also known as prolycopene) into all-trans-lycopene. Isomerization requires redox-active components, suggesting that isomerization is achieved by a reversible redox reaction acting at specific double bonds. Isomerizes adjacent cis-double bonds at C7 and C9 pairwise into the trans-configuration, but is incapable of isomerizing single cis-double bonds at C9 and C9'. In Oncidium hybrid cultivar (Orchid), this protein is Prolycopene isomerase 2, chloroplastic (CRTISO2).